The chain runs to 565 residues: Phosphomethylpyrimidine synthase (565 aa).

Residues N201, M230, Y259, H295, 315 to 317 (SRG), 356 to 359 (DGLR), and E395 contribute to the substrate site. H399 lines the Zn(2+) pocket. Residue Y422 coordinates substrate. H463 is a Zn(2+) binding site. 3 residues coordinate [4Fe-4S] cluster: C543, C546, and C551.

Belongs to the ThiC family. In terms of assembly, homodimer. [4Fe-4S] cluster serves as cofactor.

It catalyses the reaction 5-amino-1-(5-phospho-beta-D-ribosyl)imidazole + S-adenosyl-L-methionine = 4-amino-2-methyl-5-(phosphooxymethyl)pyrimidine + CO + 5'-deoxyadenosine + formate + L-methionine + 3 H(+). It participates in cofactor biosynthesis; thiamine diphosphate biosynthesis. Its function is as follows. Catalyzes the synthesis of the hydroxymethylpyrimidine phosphate (HMP-P) moiety of thiamine from aminoimidazole ribotide (AIR) in a radical S-adenosyl-L-methionine (SAM)-dependent reaction. The chain is Phosphomethylpyrimidine synthase from Ehrlichia canis (strain Jake).